The following is a 440-amino-acid chain: tRNA-2-methylthio-N(6)-dimethylallyladenosine synthase (440 aa).

Residues 7–123 (NTFYIHTFGC…LPQLIEQARS (117 aa)) form the MTTase N-terminal domain. Cysteine 16, cysteine 52, cysteine 86, cysteine 159, cysteine 163, and cysteine 166 together coordinate [4Fe-4S] cluster. One can recognise a Radical SAM core domain in the interval 145-375 (RQGSISAFVP…IDLQNTISGE (231 aa)). One can recognise a TRAM domain in the interval 378–440 (QQAIGSVVEV…TSATLTGRPV (63 aa)).

It belongs to the methylthiotransferase family. MiaB subfamily. In terms of assembly, monomer. Requires [4Fe-4S] cluster as cofactor.

Its subcellular location is the cytoplasm. It carries out the reaction N(6)-dimethylallyladenosine(37) in tRNA + (sulfur carrier)-SH + AH2 + 2 S-adenosyl-L-methionine = 2-methylsulfanyl-N(6)-dimethylallyladenosine(37) in tRNA + (sulfur carrier)-H + 5'-deoxyadenosine + L-methionine + A + S-adenosyl-L-homocysteine + 2 H(+). Catalyzes the methylthiolation of N6-(dimethylallyl)adenosine (i(6)A), leading to the formation of 2-methylthio-N6-(dimethylallyl)adenosine (ms(2)i(6)A) at position 37 in tRNAs that read codons beginning with uridine. This is tRNA-2-methylthio-N(6)-dimethylallyladenosine synthase from Pelodictyon phaeoclathratiforme (strain DSM 5477 / BU-1).